The chain runs to 390 residues: Transforming growth factor beta-1 proprotein (390 aa).

Positions 1–29 (MPPSGLRLLPLLLPLLWLLMLTPGRPVAG) are cleaved as a signal peptide. The straightjacket domain stretch occupies residues 30–74 (LSTCKTIDMELVKRKGIEAIRGQILSKLRLASPPSQGDVPPGPLP). Positions 75-271 (EAILALYNST…ATPLERAQHL (197 aa)) are arm domain. N-linked (GlcNAc...) asparagine glycosylation is found at Asn82, Asn136, and Asn176. A bowtie tail region spans residues 226 to 252 (DSKDNTLQVDINGFSSGRRGDLATIHG). The short motif at 244 to 246 (RGD) is the Cell attachment site element. Intrachain disulfides connect Cys285–Cys294, Cys293–Cys356, Cys322–Cys387, and Cys326–Cys389.

It belongs to the TGF-beta family. Homodimer; disulfide-linked. Interacts with the serine proteases, HTRA1 and HTRA3: the interaction with either inhibits TGFB1-mediated signaling and the HTRA protease activity is required for this inhibition. May interact with THSD4; this interaction may lead to sequestration by FBN1 microfibril assembly and attenuation of TGFB signaling. Interacts with CD109, DPT and ASPN. Interacts with EFEMP2. Interacts with TSKU; the interaction contributes to regulation of the hair cycle. Interacts with TGFBR3. As to quaternary structure, homodimer; disulfide-linked. Interacts with transforming growth factor beta-1 (TGF-beta-1) chain; interaction is non-covalent and maintains TGF-beta-1 in a latent state; each latency-associated peptide (LAP) monomer interacts with TGF-beta-1 in the other monomer. Interacts with LTBP1; leading to regulation of TGF-beta-1 activation. Interacts with LRRC32/GARP; leading to regulation of TGF-beta-1 activation on the surface of activated regulatory T-cells (Tregs). Interacts with LRRC33/NRROS; leading to regulation of TGF-beta-1 activation in macrophages and microglia. Interacts (via cell attachment site) with integrins ITGAV and ITGB6 (ITGAV:ITGB6), leading to release of the active TGF-beta-1. Interacts with NREP; the interaction results in a decrease in TGFB1 autoinduction. Interacts with HSP90AB1; inhibits latent TGFB1 activation. In terms of assembly, homodimer; disulfide-linked. Interacts with TGF-beta receptors (TGFBR1 and TGFBR2), leading to signal transduction. Post-translationally, transforming growth factor beta-1 proprotein: The precursor proprotein is cleaved in the Golgi apparatus by FURIN to form Transforming growth factor beta-1 (TGF-beta-1) and Latency-associated peptide (LAP) chains, which remain non-covalently linked, rendering TGF-beta-1 inactive. In terms of processing, N-glycosylated. Deglycosylation leads to activation of Transforming growth factor beta-1 (TGF-beta-1); mechanisms triggering deglycosylation-driven activation of TGF-beta-1 are however unclear.

Its subcellular location is the secreted. The protein localises to the extracellular space. It localises to the extracellular matrix. Functionally, transforming growth factor beta-1 proprotein: Precursor of the Latency-associated peptide (LAP) and Transforming growth factor beta-1 (TGF-beta-1) chains, which constitute the regulatory and active subunit of TGF-beta-1, respectively. Its function is as follows. Required to maintain the Transforming growth factor beta-1 (TGF-beta-1) chain in a latent state during storage in extracellular matrix. Associates non-covalently with TGF-beta-1 and regulates its activation via interaction with 'milieu molecules', such as LTBP1, LRRC32/GARP and LRRC33/NRROS, that control activation of TGF-beta-1. Interaction with LRRC33/NRROS regulates activation of TGF-beta-1 in macrophages and microglia. Interaction with LRRC32/GARP controls activation of TGF-beta-1 on the surface of activated regulatory T-cells (Tregs). Interaction with integrins (ITGAV:ITGB6 or ITGAV:ITGB8) results in distortion of the Latency-associated peptide chain and subsequent release of the active TGF-beta-1. Multifunctional protein that regulates the growth and differentiation of various cell types and is involved in various processes, such as normal development, immune function, microglia function and responses to neurodegeneration. Activation into mature form follows different steps: following cleavage of the proprotein in the Golgi apparatus, Latency-associated peptide (LAP) and Transforming growth factor beta-1 (TGF-beta-1) chains remain non-covalently linked rendering TGF-beta-1 inactive during storage in extracellular matrix. At the same time, LAP chain interacts with 'milieu molecules', such as LTBP1, LRRC32/GARP and LRRC33/NRROS that control activation of TGF-beta-1 and maintain it in a latent state during storage in extracellular milieus. TGF-beta-1 is released from LAP by integrins (ITGAV:ITGB6 or ITGAV:ITGB8): integrin-binding to LAP stabilizes an alternative conformation of the LAP bowtie tail and results in distortion of the LAP chain and subsequent release of the active TGF-beta-1. Once activated following release of LAP, TGF-beta-1 acts by binding to TGF-beta receptors (TGFBR1 and TGFBR2), which transduce signal. While expressed by many cells types, TGF-beta-1 only has a very localized range of action within cell environment thanks to fine regulation of its activation by Latency-associated peptide chain (LAP) and 'milieu molecules'. Plays an important role in bone remodeling: acts as a potent stimulator of osteoblastic bone formation, causing chemotaxis, proliferation and differentiation in committed osteoblasts. Can promote either T-helper 17 cells (Th17) or regulatory T-cells (Treg) lineage differentiation in a concentration-dependent manner. At high concentrations, leads to FOXP3-mediated suppression of RORC and down-regulation of IL-17 expression, favoring Treg cell development. At low concentrations in concert with IL-6 and IL-21, leads to expression of the IL-17 and IL-23 receptors, favoring differentiation to Th17 cells. Stimulates sustained production of collagen through the activation of CREB3L1 by regulated intramembrane proteolysis (RIP). Mediates SMAD2/3 activation by inducing its phosphorylation and subsequent translocation to the nucleus. Positively regulates odontoblastic differentiation in dental papilla cells, via promotion of IPO7-mediated translocation of phosphorylated SMAD2 to the nucleus and subsequent transcription of target genes. Can induce epithelial-to-mesenchymal transition (EMT) and cell migration in various cell types. The protein is Transforming growth factor beta-1 proprotein (TGFB1) of Ovis aries (Sheep).